A 25-amino-acid chain; its full sequence is Xenoposin precursor fragment R2 (25 aa).

As to expression, expressed by the skin glands.

It localises to the secreted. Its function is as follows. Antimicrobial peptide. The sequence is that of Xenoposin precursor fragment R2 from Xenopus ruwenzoriensis (Uganda clawed frog).